A 101-amino-acid polypeptide reads, in one-letter code: Large ribosomal subunit protein eL21 (101 aa).

Residues 1-18 (MVKHSRGYRTRSRSLLRK) show a composition bias toward basic residues. A disordered region spans residues 1–23 (MVKHSRGYRTRSRSLLRKSPRER).

The protein belongs to the eukaryotic ribosomal protein eL21 family.

The sequence is that of Large ribosomal subunit protein eL21 from Saccharolobus islandicus (strain Y.N.15.51 / Yellowstone #2) (Sulfolobus islandicus).